The primary structure comprises 55 residues: Photosystem II reaction center protein K (55 aa).

Residues 1-18 constitute a propeptide that is removed on maturation; sequence MFYIHLENTFDLSSTILV. The helical transmembrane segment at 26 to 46 threads the bilayer; that stretch reads IFDPIVDVMPIIPLFFFLLAF.

This sequence belongs to the PsbK family. PSII is composed of 1 copy each of membrane proteins PsbA, PsbB, PsbC, PsbD, PsbE, PsbF, PsbH, PsbI, PsbJ, PsbK, PsbL, PsbM, PsbT, PsbX, PsbY, PsbZ, Psb30/Ycf12, at least 3 peripheral proteins of the oxygen-evolving complex and a large number of cofactors. It forms dimeric complexes.

It localises to the plastid. The protein localises to the chloroplast thylakoid membrane. Its function is as follows. One of the components of the core complex of photosystem II (PSII). PSII is a light-driven water:plastoquinone oxidoreductase that uses light energy to abstract electrons from H(2)O, generating O(2) and a proton gradient subsequently used for ATP formation. It consists of a core antenna complex that captures photons, and an electron transfer chain that converts photonic excitation into a charge separation. The chain is Photosystem II reaction center protein K from Anthoceros angustus (Hornwort).